Here is a 403-residue protein sequence, read N- to C-terminus: Phosphopentomutase (403 aa).

Mn(2+) is bound by residues Asp-13, Asp-298, His-303, Asp-339, His-340, and His-351.

It belongs to the phosphopentomutase family. The cofactor is Mn(2+).

The protein localises to the cytoplasm. The catalysed reaction is 2-deoxy-alpha-D-ribose 1-phosphate = 2-deoxy-D-ribose 5-phosphate. It catalyses the reaction alpha-D-ribose 1-phosphate = D-ribose 5-phosphate. It functions in the pathway carbohydrate degradation; 2-deoxy-D-ribose 1-phosphate degradation; D-glyceraldehyde 3-phosphate and acetaldehyde from 2-deoxy-alpha-D-ribose 1-phosphate: step 1/2. Its function is as follows. Isomerase that catalyzes the conversion of deoxy-ribose 1-phosphate (dRib-1-P) and ribose 1-phosphate (Rib-1-P) to deoxy-ribose 5-phosphate (dRib-5-P) and ribose 5-phosphate (Rib-5-P), respectively. The chain is Phosphopentomutase from Streptococcus pyogenes serotype M4 (strain MGAS10750).